The sequence spans 972 residues: Isoleucine--tRNA ligase (972 aa).

The short motif at 63 to 73 (PYANGNIHIGH) is the 'HIGH' region element. Glu-603 provides a ligand contact to L-isoleucyl-5'-AMP. The 'KMSKS' region signature appears at 644 to 648 (KMSKS). Lys-647 lines the ATP pocket.

It belongs to the class-I aminoacyl-tRNA synthetase family. IleS type 1 subfamily. Monomer.

The protein resides in the cytoplasm. It carries out the reaction tRNA(Ile) + L-isoleucine + ATP = L-isoleucyl-tRNA(Ile) + AMP + diphosphate. Functionally, catalyzes the attachment of isoleucine to tRNA(Ile). As IleRS can inadvertently accommodate and process structurally similar amino acids such as valine, to avoid such errors it has two additional distinct tRNA(Ile)-dependent editing activities. One activity is designated as 'pretransfer' editing and involves the hydrolysis of activated Val-AMP. The other activity is designated 'posttransfer' editing and involves deacylation of mischarged Val-tRNA(Ile). This is Isoleucine--tRNA ligase from Brucella abortus (strain 2308).